We begin with the raw amino-acid sequence, 81 residues long: MSYLLAIGIAALIVALIIAIVVWTIVYIEYKKLVRQRKINKLYKRIRERAEDSGNESEGDAEELAALGEMGPFIPGDINNL.

The Extracellular portion of the chain corresponds to 1–7 (MSYLLAI). The helical transmembrane segment at 8-28 (GIAALIVALIIAIVVWTIVYI) threads the bilayer. The Cytoplasmic segment spans residues 29-81 (EYKKLVRQRKINKLYKRIRERAEDSGNESEGDAEELAALGEMGPFIPGDINNL). A phosphoserine; by host CK2 mark is found at S53 and S57.

Belongs to the HIV-1 VPU protein family. In terms of assembly, homopentamer. Interacts with host CD4 and BRTC; these interactions induce proteasomal degradation of CD4. Interacts with host BST2; this interaction leads to the degradation of host BST2. Interacts with host FBXW11. Interacts with host AP1M1; this interaction plays a role in the mistrafficking and subsequent degradation of host BST2. Interacts with host RANBP2; this interaction allows Vpu to down-regulate host BLM sumoylation. In terms of processing, phosphorylated by host CK2. This phosphorylation is necessary for interaction with human BTRC and degradation of CD4.

The protein resides in the host membrane. Its activity is regulated as follows. Ion channel activity is inhibited by hexamethylene amiloride in vitro. Its function is as follows. Enhances virion budding by targeting host CD4 and Tetherin/BST2 to proteasome degradation. Degradation of CD4 prevents any unwanted premature interactions between viral Env and its host receptor CD4 in the endoplasmic reticulum. Degradation of antiretroviral protein Tetherin/BST2 is important for virion budding, as BST2 tethers new viral particles to the host cell membrane. Mechanistically, Vpu bridges either CD4 or BST2 to BTRC, a substrate recognition subunit of the Skp1/Cullin/F-box protein E3 ubiquitin ligase, induces their ubiquitination and subsequent proteasomal degradation. The alteration of the E3 ligase specificity by Vpu seems to promote the degradation of host IKBKB, leading to NF-kappa-B down-regulation and subsequent apoptosis. Acts as a viroporin that forms an oligomeric ion channel in membranes. Modulates the host DNA repair mechanisms to promote degradation of nuclear viral cDNA in cells that are already productively infected in order to suppress immune sensing and proviral hyper-integration (superinfection). Manipulates PML-NBs and modulates SUMOylation of host BLM protein thereby enhancing its DNA-end processing activity toward viral unintegrated linear DNA. Also inhibits RAD52-mediated homologous repair of viral cDNA, preventing the generation of dead-end circular forms of single copies of the long terminal repeat and permitting sustained nucleolytic attack. This Homo sapiens (Human) protein is Protein Vpu.